The following is a 207-amino-acid chain: Large ribosomal subunit protein uL4 (207 aa).

It belongs to the universal ribosomal protein uL4 family. As to quaternary structure, part of the 50S ribosomal subunit.

In terms of biological role, one of the primary rRNA binding proteins, this protein initially binds near the 5'-end of the 23S rRNA. It is important during the early stages of 50S assembly. It makes multiple contacts with different domains of the 23S rRNA in the assembled 50S subunit and ribosome. Forms part of the polypeptide exit tunnel. The protein is Large ribosomal subunit protein uL4 of Rickettsia peacockii (strain Rustic).